Reading from the N-terminus, the 347-residue chain is 4-hydroxy-2-oxovalerate aldolase 1 (347 aa).

Residues 11–263 (VVLHDMCLRD…ETGVDLFKLM (253 aa)) form the Pyruvate carboxyltransferase domain. 19–20 (RD) is a substrate binding site. Aspartate 20 contacts Mn(2+). Residue histidine 23 is the Proton acceptor of the active site. Positions 173 and 202 each coordinate substrate. Residues histidine 202 and histidine 204 each coordinate Mn(2+). Tyrosine 293 is a binding site for substrate.

The protein belongs to the 4-hydroxy-2-oxovalerate aldolase family.

It catalyses the reaction (S)-4-hydroxy-2-oxopentanoate = acetaldehyde + pyruvate. This chain is 4-hydroxy-2-oxovalerate aldolase 1 (lapG), found in Azoarcus sp. (strain BH72).